A 147-amino-acid chain; its full sequence is Myoglobin (147 aa).

The Globin domain occupies 2–141 (ADFDAVLKFW…FIADMDANYK (140 aa)). H60 lines the nitrite pocket. H60 serves as a coordination point for O2. H89 lines the heme b pocket.

This sequence belongs to the globin family. In terms of assembly, monomeric.

The protein localises to the cytoplasm. The protein resides in the sarcoplasm. The enzyme catalyses Fe(III)-heme b-[protein] + nitric oxide + H2O = Fe(II)-heme b-[protein] + nitrite + 2 H(+). It catalyses the reaction H2O2 + AH2 = A + 2 H2O. In terms of biological role, monomeric heme protein which primary function is to store oxygen and facilitate its diffusion within muscle tissues. Reversibly binds oxygen through a pentacoordinated heme iron and enables its timely and efficient release as needed during periods of heightened demand. Depending on the oxidative conditions of tissues and cells, and in addition to its ability to bind oxygen, it also has a nitrite reductase activity whereby it regulates the production of bioactive nitric oxide. Under stress conditions, like hypoxia and anoxia, it also protects cells against reactive oxygen species thanks to its pseudoperoxidase activity. In Scomber japonicus (Chub mackerel), this protein is Myoglobin (mb).